A 363-amino-acid polypeptide reads, in one-letter code: Class I histocompatibility antigen, Gogo-B*0201 alpha chain (363 aa).

The N-terminal stretch at 1-24 (MQVTAPRTLLLLLSAALALTETWA) is a signal peptide. Residues 25–114 (GSHSMRYFHT…LRGYYNQSED (90 aa)) are alpha-1. Residues 25 to 308 (GSHSMRYFHT…EPSSQSTIPI (284 aa)) lie on the Extracellular side of the membrane. N-linked (GlcNAc...) asparagine glycosylation occurs at N110. The interval 115 to 206 (GSHTIQRMYG…ENGKETLQRA (92 aa)) is alpha-2. Intrachain disulfides connect C125-C188 and C227-C283. The tract at residues 207 to 298 (DPPKTHVTHH…GLPEPLTLRW (92 aa)) is alpha-3. Positions 209 to 297 (PKTHVTHHPI…EGLPEPLTLR (89 aa)) constitute an Ig-like C1-type domain. Residues 299 to 308 (EPSSQSTIPI) form a connecting peptide region. A helical transmembrane segment spans residues 309–333 (VGIVAGLAVLVVTVAVVAVVAAVMC). Residues 334-363 (RRKSSGGKGGSYSQAASSDSAQGSDVSLTA) lie on the Cytoplasmic side of the membrane. The disordered stretch occupies residues 336–363 (KSSGGKGGSYSQAASSDSAQGSDVSLTA). Residues 344 to 363 (SYSQAASSDSAQGSDVSLTA) show a composition bias toward low complexity.

Belongs to the MHC class I family. In terms of assembly, heterodimer of an alpha chain and a beta chain (beta-2-microglobulin).

The protein resides in the membrane. Its function is as follows. Involved in the presentation of foreign antigens to the immune system. The chain is Class I histocompatibility antigen, Gogo-B*0201 alpha chain from Gorilla gorilla gorilla (Western lowland gorilla).